The following is a 408-amino-acid chain: MMIKVASITKLENGSIVTPKGFSAIGTVNGLKKEKKDLGAIVCDVPASCAAVYTTNQIQAAPLQVTKDSITAEGKLQAIIVNSGNANACTGMQGLQDAYEMRVLGAEHFGMKENYVAVASTGVIGVPLPMDIIRKGVATLIPTKEESEAYSFSEAILTTDLITKETCYEMIIDGKKVVIAGVAKGSGMIHPNMATMLSFITTDAHIEHNVLQTALSQITNHTFNQITVDGDTSTNDMVIVMASGLSETRPINMEHTDWETFVGALQKVCEDLAKKIAQDGEGATKLIEVNVLGAQTNEEAKKIAKQIVGSSLVKTAIHGEDPNWGRIISSIGQSEVAINPNTIDITLQSISVLKNSEPQTFSEEKMKERLQEDEIVINVYLHLGEETGSAWGCDLSYEYVKINACYRT.

6 residues coordinate substrate: T158, K184, T195, E281, N403, and T408. The active-site Nucleophile is T195.

This sequence belongs to the ArgJ family. As to quaternary structure, heterotetramer of two alpha and two beta chains.

Its subcellular location is the cytoplasm. The enzyme catalyses N(2)-acetyl-L-ornithine + L-glutamate = N-acetyl-L-glutamate + L-ornithine. It carries out the reaction L-glutamate + acetyl-CoA = N-acetyl-L-glutamate + CoA + H(+). It participates in amino-acid biosynthesis; L-arginine biosynthesis; L-ornithine and N-acetyl-L-glutamate from L-glutamate and N(2)-acetyl-L-ornithine (cyclic): step 1/1. The protein operates within amino-acid biosynthesis; L-arginine biosynthesis; N(2)-acetyl-L-ornithine from L-glutamate: step 1/4. Catalyzes two activities which are involved in the cyclic version of arginine biosynthesis: the synthesis of N-acetylglutamate from glutamate and acetyl-CoA as the acetyl donor, and of ornithine by transacetylation between N(2)-acetylornithine and glutamate. This Bacillus cereus (strain ATCC 14579 / DSM 31 / CCUG 7414 / JCM 2152 / NBRC 15305 / NCIMB 9373 / NCTC 2599 / NRRL B-3711) protein is Arginine biosynthesis bifunctional protein ArgJ.